Consider the following 171-residue polypeptide: Large ribosomal subunit protein uL10 (171 aa).

The protein belongs to the universal ribosomal protein uL10 family. Part of the ribosomal stalk of the 50S ribosomal subunit. The N-terminus interacts with L11 and the large rRNA to form the base of the stalk. The C-terminus forms an elongated spine to which L12 dimers bind in a sequential fashion forming a multimeric L10(L12)X complex.

In terms of biological role, forms part of the ribosomal stalk, playing a central role in the interaction of the ribosome with GTP-bound translation factors. This Cereibacter sphaeroides (strain ATCC 17023 / DSM 158 / JCM 6121 / CCUG 31486 / LMG 2827 / NBRC 12203 / NCIMB 8253 / ATH 2.4.1.) (Rhodobacter sphaeroides) protein is Large ribosomal subunit protein uL10.